The sequence spans 50 residues: Large ribosomal subunit protein eL40 (50 aa).

It belongs to the eukaryotic ribosomal protein eL40 family.

The polypeptide is Large ribosomal subunit protein eL40 (Aeropyrum pernix (strain ATCC 700893 / DSM 11879 / JCM 9820 / NBRC 100138 / K1)).